A 109-amino-acid chain; its full sequence is Transmembrane protein 233 (109 aa).

Positions 1–30 are disordered; it reads MSQYAPSPDFKRALDSSPEANTEDDKTEED. Over 1 to 41 the chain is Cytoplasmic; that stretch reads MSQYAPSPDFKRALDSSPEANTEDDKTEEDVPMPKNYLWLT. Residues 21-30 are compositionally biased toward acidic residues; the sequence is NTEDDKTEED. The helical intramembrane region spans 42 to 62; it reads IVSCFCPAYPINIVALVFSIM. The Cytoplasmic portion of the chain corresponds to 63-84; sequence SLNSYNDGDYEGARRLGRNAKW. A helical membrane pass occupies residues 85–105; that stretch reads VAIASIIIGLLIIGISCAVHF. Residues 106-109 are Extracellular-facing; sequence TRNA.

This sequence belongs to the CD225/Dispanin family. Interacts with the giant stinging tree toxin ExTxA (AC P0DQP3). Interacts with Nav1.7/SCN9A. Interacts with Nav1.1/SCN1A, Nav1.2/SCN2A, Nav1.3/SCN3A, Nav1.4/SCN4A, Nav1.5/SCN5A, and Nav1.6/SCN8A.

It is found in the cell membrane. Functionally, probable accessory protein of voltage-gated sodium channels. In Homo sapiens (Human), this protein is Transmembrane protein 233.